We begin with the raw amino-acid sequence, 610 residues long: Aspartate--tRNA(Asp/Asn) ligase (610 aa).

L-aspartate is bound at residue Glu-196. Positions 220 to 223 (QIFK) are aspartate. Arg-242 is an L-aspartate binding site. ATP contacts are provided by residues 242–244 (RDE) and Gln-251. His-465 lines the L-aspartate pocket. Glu-499 contributes to the ATP binding site. Residue Arg-506 participates in L-aspartate binding. 551–554 (GMDR) serves as a coordination point for ATP.

This sequence belongs to the class-II aminoacyl-tRNA synthetase family. Type 1 subfamily. Homodimer.

The protein localises to the cytoplasm. It carries out the reaction tRNA(Asx) + L-aspartate + ATP = L-aspartyl-tRNA(Asx) + AMP + diphosphate. Its function is as follows. Aspartyl-tRNA synthetase with relaxed tRNA specificity since it is able to aspartylate not only its cognate tRNA(Asp) but also tRNA(Asn). Reaction proceeds in two steps: L-aspartate is first activated by ATP to form Asp-AMP and then transferred to the acceptor end of tRNA(Asp/Asn). The protein is Aspartate--tRNA(Asp/Asn) ligase of Nitratidesulfovibrio vulgaris (strain ATCC 29579 / DSM 644 / CCUG 34227 / NCIMB 8303 / VKM B-1760 / Hildenborough) (Desulfovibrio vulgaris).